The sequence spans 318 residues: SPX domain-containing protein 4 (318 aa).

Positions 1–187 constitute an SPX domain; sequence MKFGKEFRTH…GGLLRLPFTQ (187 aa). The span at 226 to 237 shows a compositional bias: low complexity; that stretch reads SAVQAHSSSHQH. Disordered stretches follow at residues 226 to 247 and 284 to 318; these read SAVQAHSSSHQHNSPRISAETS and SSLLQNEDDETVTAENSPNSGNKDDSEKEDTGPSH. Positions 305 to 318 are enriched in basic and acidic residues; that stretch reads NKDDSEKEDTGPSH.

This Arabidopsis thaliana (Mouse-ear cress) protein is SPX domain-containing protein 4 (SPX4).